Consider the following 459-residue polypeptide: Phosphoglucosamine mutase (459 aa).

Residue serine 106 is the Phosphoserine intermediate of the active site. Positions 106, 247, 249, and 251 each coordinate Mg(2+). Residue serine 106 is modified to Phosphoserine.

It belongs to the phosphohexose mutase family. It depends on Mg(2+) as a cofactor. In terms of processing, activated by phosphorylation.

It catalyses the reaction alpha-D-glucosamine 1-phosphate = D-glucosamine 6-phosphate. Catalyzes the conversion of glucosamine-6-phosphate to glucosamine-1-phosphate. This is Phosphoglucosamine mutase from Chlamydia muridarum (strain MoPn / Nigg).